We begin with the raw amino-acid sequence, 319 residues long: NH(3)-dependent NAD(+) synthetase (319 aa).

33–40 (GLSGGIDS) contributes to the ATP binding site. Aspartate 39 serves as a coordination point for Mg(2+). Position 169 (arginine 169) interacts with deamido-NAD(+). Residue threonine 189 coordinates ATP. Glutamate 194 lines the Mg(2+) pocket. Deamido-NAD(+) is bound by residues lysine 202 and aspartate 209. ATP contacts are provided by lysine 218 and threonine 240.

It belongs to the NAD synthetase family. As to quaternary structure, homodimer.

It catalyses the reaction deamido-NAD(+) + NH4(+) + ATP = AMP + diphosphate + NAD(+) + H(+). Its pathway is cofactor biosynthesis; NAD(+) biosynthesis; NAD(+) from deamido-NAD(+) (ammonia route): step 1/1. In terms of biological role, catalyzes the ATP-dependent amidation of deamido-NAD to form NAD. Uses ammonia as a nitrogen source. The sequence is that of NH(3)-dependent NAD(+) synthetase from Mesorhizobium japonicum (strain LMG 29417 / CECT 9101 / MAFF 303099) (Mesorhizobium loti (strain MAFF 303099)).